A 291-amino-acid polypeptide reads, in one-letter code: E3 ubiquitin-protein ligase MARCHF8 (291 aa).

The interval 22–72 (YRSKTKEKEREEQNEKTLGHFMSHSSNISKAGSPPSASAPAPVSSFSRTSI) is disordered. Positions 25–39 (KTKEKEREEQNEKTL) are enriched in basic and acidic residues. Residues 50–72 (SKAGSPPSASAPAPVSSFSRTSI) are compositionally biased toward low complexity. The RING-CH-type zinc finger occupies 72 to 133 (ITPSSQDICR…ELCKYEFIME (62 aa)). Zn(2+) contacts are provided by Cys80, Cys83, Cys97, Cys99, His107, Cys110, Cys123, and Cys126. 2 helical membrane passes run 157 to 177 (CSVT…YVLI) and 197 to 217 (FWTK…FMYV). Ser253 is modified (phosphoserine).

As to quaternary structure, interacts with CD86. In terms of tissue distribution, broadly expressed. Present in immature dendritic cells (at protein level).

Its subcellular location is the golgi apparatus membrane. The protein resides in the endoplasmic reticulum membrane. The protein localises to the cytoplasmic vesicle membrane. It localises to the lysosome membrane. It is found in the early endosome membrane. It catalyses the reaction S-ubiquitinyl-[E2 ubiquitin-conjugating enzyme]-L-cysteine + [acceptor protein]-L-lysine = [E2 ubiquitin-conjugating enzyme]-L-cysteine + N(6)-ubiquitinyl-[acceptor protein]-L-lysine.. It functions in the pathway protein modification; protein ubiquitination. Functionally, E3 ubiquitin-protein ligase that plays several important roles in innate immunity and adaptive immunity. Mediates ubiquitination of CD86 and MHC class II proteins, such as HLA-DR alpha and beta, and promotes their subsequent endocytosis and sorting to lysosomes via multivesicular bodies. Possesses a very broad antiviral activity by specifically inactivating different viral fusion proteins. Targets and ubiquitinates cytoplasmic lysine residues of viral envelope glycoproteins with single transmembrane domains leading to their lysosomal degradation. Therefore, shows broad-spectrum inhibition against many viruses including retroviruses, rhabdoviruses, arenaviruses, sarbecoviruses or influenzaviruses. Strongly blocks human immunodeficiency virus type 1 envelope glycoprotein incorporation into virions by down-regulating its cell surface expression. Also blocks ebola virus glycoprotein/GP incorporation via surface down-regulation. Mediates 'Lys-63'-linked polyubiquitination of influenza M2 to target it to lysosome for degradation. Mediates the regulation of constitutive ubiquitination and trafficking of the viral restriction factor BST2 within the endocytic pathway. Plays a role in maintenance of immune tolerance to self by promoting the turnover and proteasomal degradation of PD-L1/CD274 via ubiquitination. Catalyzes the 'Lys-63'-linked polyubiquitylation of cGAS thereby inhibiting its DNA binding ability and impairing its antiviral innate immunity. Negatively regulates IL7-mediated T-cell homeostasis by mediating 'Lys-27'-linked polyubiquitination of IL7R, leading to its lysosomal degradation. Its function is as follows. (Microbial infection) Mediates 'Lys-63'-linked polyubiquitination of hepatitis C virus/HCV protein NS2 which allows its binding to HGS, an ESCRT-0 complex component, and this interaction is essential for HCV envelopment. The sequence is that of E3 ubiquitin-protein ligase MARCHF8 from Homo sapiens (Human).